Reading from the N-terminus, the 430-residue chain is MGKNVVVLGTQWGDEGKGKIVDLLTEHAAAVVRYQGGHNAGHTLVINGEKTVLHLIPSGILREGVQCLIGNGVVVAPDALMREITKLEEKGVPVRERLRISPAAPLILSYHVALDQAREKARGEAKIGTTGRGIGPAYEDKVARRGLRVGDLFHRERFAAKLGELLDYHNFQLVNYYKEPAIDFQQTLDECMAYAEQLKPMMLDVTAELHNLRRAGKDIMFEGAQGSLLDIDHGTYPYVTSSNTTAGGISTGSGVGPMYLDYILGITKAYTTRVGSGPFPTELFDETGATLAKRGHEFGSTTGRARRCGWFDAVILRRAIDVNSISGICLTKLDVLDGLETINICVGYKNENGAVIDAPSDADSYIGLEPVYEEMPGWSESTLGAKTLEELPAAARAYIKRIEELTGAPIDIISTGPDRNETIVLRHPFA.

GTP contacts are provided by residues 13–19 and 41–43; these read GDEGKGK and GHT. Residue aspartate 14 is the Proton acceptor of the active site. 2 residues coordinate Mg(2+): aspartate 14 and glycine 41. IMP-binding positions include 14–17, 39–42, threonine 130, arginine 144, glutamine 225, threonine 240, and arginine 304; these read DEGK and NAGH. Histidine 42 acts as the Proton donor in catalysis. 300 to 306 is a substrate binding site; sequence STTGRAR. Residues arginine 306, 332-334, and 414-416 contribute to the GTP site; these read KLD and STG.

Belongs to the adenylosuccinate synthetase family. Homodimer. Mg(2+) serves as cofactor.

It is found in the cytoplasm. It catalyses the reaction IMP + L-aspartate + GTP = N(6)-(1,2-dicarboxyethyl)-AMP + GDP + phosphate + 2 H(+). It functions in the pathway purine metabolism; AMP biosynthesis via de novo pathway; AMP from IMP: step 1/2. Plays an important role in the de novo pathway of purine nucleotide biosynthesis. Catalyzes the first committed step in the biosynthesis of AMP from IMP. In Pseudomonas putida (strain W619), this protein is Adenylosuccinate synthetase.